A 468-amino-acid chain; its full sequence is MVIFDSVVKKKLEFIPLENDFVRIYVCGPTVYDDAHLGHAKSAISFDLLRRTLVALGFKVKFVKNFTDIDDKILKKMEDSGKSLKEITEFYISRYLDDMNALNVLRADIEPRATECIDEIIEFVEELLDNGAAYKIQGDGIYFDTSKDSDYLSLSGKKDSDENIARVASNAQKKDEKDFALWKFDEKYYKAKFGCGRPGWHTECVVMIKKYLTDNKQKYLIDIHAGGMDLLFPHHENEAAQCRCAEHKNLAKYWMHNGFVQVNNEKMSKSLGNSFFIKDALKIVPGEALRFYLMSSHYRANFNYSVNDLFSSKKRLDKIYRLKKRLQGAKKGISDEKFKAEILDALSDDLNTSLALSIVDSMVNSANERLDKNPKDKMKKGEILANLDFVKETLGILYTDENLYFQFGVSETKKAEISDLIAQRDAAKKEKNFALADEIREKLALQNITLMDTPNGTVWEISNETDIK.

Cys-27 lines the Zn(2+) pocket. The short motif at 29–39 is the 'HIGH' region element; sequence PTVYDDAHLGH. Zn(2+) is bound by residues Cys-204, His-234, and Glu-238. The 'KMSKS' region motif lies at 266–270; sequence KMSKS. Residue Lys-269 participates in ATP binding.

It belongs to the class-I aminoacyl-tRNA synthetase family. Monomer. It depends on Zn(2+) as a cofactor.

Its subcellular location is the cytoplasm. The enzyme catalyses tRNA(Cys) + L-cysteine + ATP = L-cysteinyl-tRNA(Cys) + AMP + diphosphate. The chain is Cysteine--tRNA ligase from Campylobacter hominis (strain ATCC BAA-381 / DSM 21671 / CCUG 45161 / LMG 19568 / NCTC 13146 / CH001A).